The chain runs to 1689 residues: DNA-directed RNA polymerase I subunit rpa1 (1689 aa).

Residues Cys-63, Cys-66, Cys-73, and His-76 each coordinate Zn(2+). Phosphoserine is present on residues Ser-159 and Ser-161. Over residues Val-269–Asp-280 the composition is skewed to basic and acidic residues. Positions Val-269–Val-295 are disordered. Residues Glu-281 to Val-295 show a composition bias toward acidic residues. Mg(2+)-binding residues include Asp-643, Asp-645, and Asp-647. The segment at Pro-1005–Glu-1017 is bridging helix. The segment at Arg-1346–Glu-1440 is disordered. A phosphoserine mark is found at Ser-1438 and Ser-1441.

Belongs to the RNA polymerase beta' chain family. In terms of assembly, component of the RNA polymerase I (Pol I) complex consisting of at least 13 subunits.

It localises to the nucleus. It is found in the nucleolus. The enzyme catalyses RNA(n) + a ribonucleoside 5'-triphosphate = RNA(n+1) + diphosphate. DNA-dependent RNA polymerase catalyzes the transcription of DNA into RNA using the four ribonucleoside triphosphates as substrates. Largest and catalytic core component of RNA polymerase I which synthesizes ribosomal RNA precursors. Forms the polymerase active center together with the second largest subunit. A single stranded DNA template strand of the promoter is positioned within the central active site cleft of Pol I. A bridging helix emanates from RPA1 and crosses the cleft near the catalytic site and is thought to promote translocation of Pol I by acting as a ratchet that moves the RNA-DNA hybrid through the active site by switching from straight to bent conformations at each step of nucleotide addition. The chain is DNA-directed RNA polymerase I subunit rpa1 (rpa1) from Schizosaccharomyces pombe (strain 972 / ATCC 24843) (Fission yeast).